Reading from the N-terminus, the 424-residue chain is MFYDQAKIYVKGGDGGAGAVAFRREKYVPEGGPSGGDGGRGGKVIFIADEGLRTLVDFRYKRHYKADRGEHGQGKNMHGKSGEDMSVRIPVGTVVKDADTGEILADLIEHGQKVVVANGGRGGRGNARFMSNTNKAPTVAENGEPGEERNLLLELKLLADVGLVGFPNVGKSTIISRISAAKPKIADYHFTTLVPNLGVVELEDGESFVVADIPGLIEGAHTGAGLGHEFLRHTERTRLIFHVLDIAGSEERDPLEDFQIIAEELRQYSQELANRPILIVANKMDIPGAEENLQRLTEKLGEDYRIFPVSAATGEGLKELVYAAAKALPEIPAPQIFVRDEEQHKLTQASAPHRFELTREGDFFVVSGKEIEKHVQMTMFDREDGLYRFQNILKAMGIERALLDEGIKVGDKVRIAGIEFEWEE.

In terms of domain architecture, Obg spans 1–158 (MFYDQAKIYV…RNLLLELKLL (158 aa)). One can recognise an OBG-type G domain in the interval 159–329 (ADVGLVGFPN…LVYAAAKALP (171 aa)). GTP contacts are provided by residues 165–172 (GFPNVGKS), 190–194 (FTTLV), 212–215 (DIPG), 282–285 (NKMD), and 310–312 (SAA). Mg(2+)-binding residues include Ser-172 and Thr-192. Positions 347 to 424 (TQASAPHRFE…IAGIEFEWEE (78 aa)) constitute an OCT domain.

It belongs to the TRAFAC class OBG-HflX-like GTPase superfamily. OBG GTPase family. Monomer. The cofactor is Mg(2+).

It localises to the cytoplasm. In terms of biological role, an essential GTPase which binds GTP, GDP and possibly (p)ppGpp with moderate affinity, with high nucleotide exchange rates and a fairly low GTP hydrolysis rate. Plays a role in control of the cell cycle, stress response, ribosome biogenesis and in those bacteria that undergo differentiation, in morphogenesis control. This is GTPase Obg from Desulfitobacterium hafniense (strain Y51).